The following is a 290-amino-acid chain: Dihydroorotate dehydrogenase B (NAD(+)), catalytic subunit (290 aa).

Residues S17 and 42–43 (KT) each bind FMN. Residues K42, 67–71 (NAIGL), and N117 each bind substrate. An FMN-binding site is contributed by N117. Residue S120 is the Nucleophile of the active site. 2 residues coordinate FMN: K152 and I177. 178 to 179 (NT) contributes to the substrate binding site. FMN contacts are provided by residues G203, 229-230 (GG), and 251-252 (GT).

This sequence belongs to the dihydroorotate dehydrogenase family. Type 1 subfamily. Heterotetramer of 2 PyrK and 2 PyrD type B subunits. The cofactor is FMN.

It is found in the cytoplasm. It carries out the reaction (S)-dihydroorotate + NAD(+) = orotate + NADH + H(+). Its pathway is pyrimidine metabolism; UMP biosynthesis via de novo pathway; orotate from (S)-dihydroorotate (NAD(+) route): step 1/1. In terms of biological role, catalyzes the conversion of dihydroorotate to orotate with NAD(+) as electron acceptor. This chain is Dihydroorotate dehydrogenase B (NAD(+)), catalytic subunit (pyrD), found in Saccharolobus solfataricus (strain ATCC 35092 / DSM 1617 / JCM 11322 / P2) (Sulfolobus solfataricus).